Reading from the N-terminus, the 551-residue chain is Dihydroxy-acid dehydratase (551 aa).

Asp-78 is a Mg(2+) binding site. Cys-119 serves as a coordination point for [2Fe-2S] cluster. Mg(2+) contacts are provided by Asp-120 and Lys-121. Lys-121 carries the N6-carboxylysine modification. Cys-191 serves as a coordination point for [2Fe-2S] cluster. Glu-441 contacts Mg(2+). Ser-467 acts as the Proton acceptor in catalysis.

This sequence belongs to the IlvD/Edd family. In terms of assembly, homodimer. [2Fe-2S] cluster serves as cofactor. Mg(2+) is required as a cofactor.

It catalyses the reaction (2R)-2,3-dihydroxy-3-methylbutanoate = 3-methyl-2-oxobutanoate + H2O. The enzyme catalyses (2R,3R)-2,3-dihydroxy-3-methylpentanoate = (S)-3-methyl-2-oxopentanoate + H2O. It functions in the pathway amino-acid biosynthesis; L-isoleucine biosynthesis; L-isoleucine from 2-oxobutanoate: step 3/4. Its pathway is amino-acid biosynthesis; L-valine biosynthesis; L-valine from pyruvate: step 3/4. Its function is as follows. Functions in the biosynthesis of branched-chain amino acids. Catalyzes the dehydration of (2R,3R)-2,3-dihydroxy-3-methylpentanoate (2,3-dihydroxy-3-methylvalerate) into 2-oxo-3-methylpentanoate (2-oxo-3-methylvalerate) and of (2R)-2,3-dihydroxy-3-methylbutanoate (2,3-dihydroxyisovalerate) into 2-oxo-3-methylbutanoate (2-oxoisovalerate), the penultimate precursor to L-isoleucine and L-valine, respectively. This chain is Dihydroxy-acid dehydratase, found in Pyrococcus abyssi (strain GE5 / Orsay).